Here is a 230-residue protein sequence, read N- to C-terminus: Orotidine 5'-phosphate decarboxylase (230 aa).

Substrate contacts are provided by residues aspartate 11, lysine 34, 61 to 70, threonine 117, arginine 179, glutamine 188, glycine 208, and arginine 209; that span reads DLKLHDIPNT. The active-site Proton donor is lysine 63.

This sequence belongs to the OMP decarboxylase family. Type 1 subfamily. As to quaternary structure, homodimer.

The catalysed reaction is orotidine 5'-phosphate + H(+) = UMP + CO2. It functions in the pathway pyrimidine metabolism; UMP biosynthesis via de novo pathway; UMP from orotate: step 2/2. Catalyzes the decarboxylation of orotidine 5'-monophosphate (OMP) to uridine 5'-monophosphate (UMP). The sequence is that of Orotidine 5'-phosphate decarboxylase from Streptococcus pyogenes serotype M1.